The following is a 364-amino-acid chain: Chorismate synthase (364 aa).

Residues R48 and R54 each contribute to the NADP(+) site. Residues 125 to 127 (RSS), G282, 297 to 301 (KPPAS), and R323 each bind FMN.

It belongs to the chorismate synthase family. Homotetramer. FMNH2 serves as cofactor.

The enzyme catalyses 5-O-(1-carboxyvinyl)-3-phosphoshikimate = chorismate + phosphate. Its pathway is metabolic intermediate biosynthesis; chorismate biosynthesis; chorismate from D-erythrose 4-phosphate and phosphoenolpyruvate: step 7/7. Its function is as follows. Catalyzes the anti-1,4-elimination of the C-3 phosphate and the C-6 proR hydrogen from 5-enolpyruvylshikimate-3-phosphate (EPSP) to yield chorismate, which is the branch point compound that serves as the starting substrate for the three terminal pathways of aromatic amino acid biosynthesis. This reaction introduces a second double bond into the aromatic ring system. The polypeptide is Chorismate synthase (Chloroflexus aggregans (strain MD-66 / DSM 9485)).